A 376-amino-acid polypeptide reads, in one-letter code: Putative F-box only protein 9 (376 aa).

One can recognise an F-box domain in the interval 1–44 (MSDLPPDLVEDILSRVPATSLKRLRFTCKQWNSLFKNRRFTEKH).

This Arabidopsis thaliana (Mouse-ear cress) protein is Putative F-box only protein 9 (FBX9).